Reading from the N-terminus, the 213-residue chain is MKLFKISLIKNYFIEGSSYGLFNFDLQDFSNCDRVAWGNLLRRTLLKDLEGLRFGNSSIFISRSFSKIPYYHRVNEYSDIEQVNPSLLQVFSNFRNLHIFSSKPFYRKTSYSMIKVLTSRSYFSKDILLPNNLYVVNPDVQLFEFLSKRYKLRIISEICKGSGKSFSPIKKVNYVVEGIPYASLLLEIYTDLRANALSSLLATLRLINPKFAA.

The protein belongs to the RNA polymerase alpha chain family. In terms of assembly, in plastids the minimal PEP RNA polymerase catalytic core is composed of four subunits: alpha, beta, beta', and beta''. When a (nuclear-encoded) sigma factor is associated with the core the holoenzyme is formed, which can initiate transcription.

The protein resides in the plastid. It is found in the chloroplast. It catalyses the reaction RNA(n) + a ribonucleoside 5'-triphosphate = RNA(n+1) + diphosphate. Functionally, DNA-dependent RNA polymerase catalyzes the transcription of DNA into RNA using the four ribonucleoside triphosphates as substrates. In Euglena stellata, this protein is DNA-directed RNA polymerase subunit alpha (rpoA).